Reading from the N-terminus, the 334-residue chain is Holliday junction branch migration complex subunit RuvB (334 aa).

Residues 4–184 form a large ATPase domain (RuvB-L) region; that stretch reads ADRLIQPQLQ…FGIPLRLEFY (181 aa). Residues Arg-24, Gly-65, Lys-68, Thr-69, Thr-70, 131-133, Arg-174, Tyr-184, and Arg-221 each bind ATP; that span reads EDY. Thr-69 is a Mg(2+) binding site. The small ATPAse domain (RuvB-S) stretch occupies residues 185 to 255; that stretch reads NVKDLSTIVT…VAEHALDLLD (71 aa). The interval 258 to 334 is head domain (RuvB-H); the sequence is GEGFDYMDRK…YLHFGMIKPE (77 aa). DNA contacts are provided by Arg-294, Arg-313, and Arg-318.

The protein belongs to the RuvB family. Homohexamer. Forms an RuvA(8)-RuvB(12)-Holliday junction (HJ) complex. HJ DNA is sandwiched between 2 RuvA tetramers; dsDNA enters through RuvA and exits via RuvB. An RuvB hexamer assembles on each DNA strand where it exits the tetramer. Each RuvB hexamer is contacted by two RuvA subunits (via domain III) on 2 adjacent RuvB subunits; this complex drives branch migration. In the full resolvosome a probable DNA-RuvA(4)-RuvB(12)-RuvC(2) complex forms which resolves the HJ.

It is found in the cytoplasm. It catalyses the reaction ATP + H2O = ADP + phosphate + H(+). Its function is as follows. The RuvA-RuvB-RuvC complex processes Holliday junction (HJ) DNA during genetic recombination and DNA repair, while the RuvA-RuvB complex plays an important role in the rescue of blocked DNA replication forks via replication fork reversal (RFR). RuvA specifically binds to HJ cruciform DNA, conferring on it an open structure. The RuvB hexamer acts as an ATP-dependent pump, pulling dsDNA into and through the RuvAB complex. RuvB forms 2 homohexamers on either side of HJ DNA bound by 1 or 2 RuvA tetramers; 4 subunits per hexamer contact DNA at a time. Coordinated motions by a converter formed by DNA-disengaged RuvB subunits stimulates ATP hydrolysis and nucleotide exchange. Immobilization of the converter enables RuvB to convert the ATP-contained energy into a lever motion, pulling 2 nucleotides of DNA out of the RuvA tetramer per ATP hydrolyzed, thus driving DNA branch migration. The RuvB motors rotate together with the DNA substrate, which together with the progressing nucleotide cycle form the mechanistic basis for DNA recombination by continuous HJ branch migration. Branch migration allows RuvC to scan DNA until it finds its consensus sequence, where it cleaves and resolves cruciform DNA. The polypeptide is Holliday junction branch migration complex subunit RuvB (Shewanella sp. (strain MR-4)).